Here is a 408-residue protein sequence, read N- to C-terminus: 8-amino-7-oxononanoate synthase (408 aa).

Substrate is bound at residue Arg-20. Residue Gly-119 to Tyr-120 participates in pyridoxal 5'-phosphate binding. A substrate-binding site is contributed by His-144. Ser-190, His-218, and Thr-246 together coordinate pyridoxal 5'-phosphate. Lys-249 is subject to N6-(pyridoxal phosphate)lysine. Residue Thr-372 participates in substrate binding.

Belongs to the class-II pyridoxal-phosphate-dependent aminotransferase family. BioF subfamily. As to quaternary structure, homodimer. Pyridoxal 5'-phosphate is required as a cofactor.

The catalysed reaction is 6-carboxyhexanoyl-[ACP] + L-alanine + H(+) = (8S)-8-amino-7-oxononanoate + holo-[ACP] + CO2. Its pathway is cofactor biosynthesis; biotin biosynthesis. Its function is as follows. Catalyzes the decarboxylative condensation of pimeloyl-[acyl-carrier protein] and L-alanine to produce 8-amino-7-oxononanoate (AON), [acyl-carrier protein], and carbon dioxide. In Leptothrix cholodnii (strain ATCC 51168 / LMG 8142 / SP-6) (Leptothrix discophora (strain SP-6)), this protein is 8-amino-7-oxononanoate synthase.